Here is a 288-residue protein sequence, read N- to C-terminus: Aquaporin PIP1-5 (288 aa).

Positions 1-36 are disordered; it reads MEGKEEDVRLGANRYSERQPIGTAAQGTEEKDYKEP. 2 consecutive transmembrane segments (helical) span residues 57–77 and 92–114; these read IAEF…VMGV and IAWS…SGGH. Residues 116-118 carry the NPA 1 motif; sequence NPA. The next 3 helical transmembrane spans lie at 135-155, 177-197, and 211-231; these read LFYM…VKGF, GDGL…VFSA, and ILAP…TIPI. The NPA 2 signature appears at 237 to 239; sequence NPA. A helical membrane pass occupies residues 259-279; that stretch reads IFWVGPFIGAALAAIYHVVII.

This sequence belongs to the MIP/aquaporin (TC 1.A.8) family. PIP (TC 1.A.8.11) subfamily. As to expression, highly expressed in roots and at lower levels in anthers and silks.

Its subcellular location is the cell membrane. Water channel required to facilitate the transport of water across cell membrane. The chain is Aquaporin PIP1-5 (PIP1-5) from Zea mays (Maize).